The following is a 208-amino-acid chain: Methylthioribulose-1-phosphate dehydratase (208 aa).

Residues H99 and H101 each coordinate Zn(2+).

Belongs to the aldolase class II family. MtnB subfamily. The cofactor is Zn(2+).

It catalyses the reaction 5-(methylsulfanyl)-D-ribulose 1-phosphate = 5-methylsulfanyl-2,3-dioxopentyl phosphate + H2O. It functions in the pathway amino-acid biosynthesis; L-methionine biosynthesis via salvage pathway; L-methionine from S-methyl-5-thio-alpha-D-ribose 1-phosphate: step 2/6. Catalyzes the dehydration of methylthioribulose-1-phosphate (MTRu-1-P) into 2,3-diketo-5-methylthiopentyl-1-phosphate (DK-MTP-1-P). This Aquifex aeolicus (strain VF5) protein is Methylthioribulose-1-phosphate dehydratase.